A 331-amino-acid polypeptide reads, in one-letter code: ADP-L-glycero-D-manno-heptose-6-epimerase (331 aa).

NADP(+)-binding positions include 11–12 (FI), 32–33 (DN), Lys-39, Lys-54, 75–79 (EGACS), and Asn-92. Tyr-139 functions as the Proton acceptor in the catalytic mechanism. NADP(+) is bound at residue Lys-143. Asn-168 contacts substrate. 2 residues coordinate NADP(+): Val-169 and Lys-177. Lys-177 acts as the Proton acceptor in catalysis. Residues Arg-179, His-186, 200-203 (FGEY), Arg-213, and Tyr-292 each bind substrate.

The protein belongs to the NAD(P)-dependent epimerase/dehydratase family. HldD subfamily. Homopentamer. NADP(+) serves as cofactor.

It catalyses the reaction ADP-D-glycero-beta-D-manno-heptose = ADP-L-glycero-beta-D-manno-heptose. The protein operates within nucleotide-sugar biosynthesis; ADP-L-glycero-beta-D-manno-heptose biosynthesis; ADP-L-glycero-beta-D-manno-heptose from D-glycero-beta-D-manno-heptose 7-phosphate: step 4/4. Catalyzes the interconversion between ADP-D-glycero-beta-D-manno-heptose and ADP-L-glycero-beta-D-manno-heptose via an epimerization at carbon 6 of the heptose. This is ADP-L-glycero-D-manno-heptose-6-epimerase from Cupriavidus metallidurans (strain ATCC 43123 / DSM 2839 / NBRC 102507 / CH34) (Ralstonia metallidurans).